A 147-amino-acid polypeptide reads, in one-letter code: Cyanate hydratase (147 aa).

Residues Arg-88, Glu-91, and Ser-114 contribute to the active site.

This sequence belongs to the cyanase family.

The enzyme catalyses cyanate + hydrogencarbonate + 3 H(+) = NH4(+) + 2 CO2. Its function is as follows. Catalyzes the reaction of cyanate with bicarbonate to produce ammonia and carbon dioxide. The chain is Cyanate hydratase from Ralstonia pickettii (strain 12J).